A 325-amino-acid chain; its full sequence is Pyruvate dehydrogenase E1 component subunit beta (325 aa).

Glutamate 60 provides a ligand contact to thiamine diphosphate.

In terms of assembly, heterodimer of an alpha and a beta chain. Requires thiamine diphosphate as cofactor.

It catalyses the reaction N(6)-[(R)-lipoyl]-L-lysyl-[protein] + pyruvate + H(+) = N(6)-[(R)-S(8)-acetyldihydrolipoyl]-L-lysyl-[protein] + CO2. In terms of biological role, the pyruvate dehydrogenase complex catalyzes the overall conversion of pyruvate to acetyl-CoA and CO(2). It contains multiple copies of three enzymatic components: pyruvate dehydrogenase (E1), dihydrolipoamide acetyltransferase (E2) and lipoamide dehydrogenase (E3). This is Pyruvate dehydrogenase E1 component subunit beta (pdhB) from Staphylococcus epidermidis (strain ATCC 35984 / DSM 28319 / BCRC 17069 / CCUG 31568 / BM 3577 / RP62A).